Reading from the N-terminus, the 91-residue chain is Alpha-defensin-related sequence 10 (91 aa).

The first 19 residues, Met1–Ala19, serve as a signal peptide directing secretion. A propeptide spanning residues Asp20–Cys65 is cleaved from the precursor. The disordered stretch occupies residues Ser21 to Ser52. 7 consecutive repeat copies span residues Cys65–Pro67, Cys68–Ser70, Cys71–Ser73, Cys74–Trp76, Cys77–Met79, Cys80–Arg82, and Cys83–Ser85. The 7 X 3 AA tandem repeats of C-P-X stretch occupies residues Cys65–Ser85.

The protein belongs to the alpha-defensin family. As to expression, paneth cells of the small bowel.

The protein resides in the secreted. Functionally, apparent precursor of a secreted, cationic, proline- and cysteine-rich peptide that contains Cys-Pro-Xaa repeats. Unlike cryptdin, the proposed mature peptide region lacks the structural motif characteristic of defensins. It may have microbicidal activities. This chain is Alpha-defensin-related sequence 10 (Defa-rs10), found in Mus musculus (Mouse).